The chain runs to 147 residues: Large ribosomal subunit protein uL13 (147 aa).

Belongs to the universal ribosomal protein uL13 family. As to quaternary structure, part of the 50S ribosomal subunit.

This protein is one of the early assembly proteins of the 50S ribosomal subunit, although it is not seen to bind rRNA by itself. It is important during the early stages of 50S assembly. This Mycolicibacterium paratuberculosis (strain ATCC BAA-968 / K-10) (Mycobacterium paratuberculosis) protein is Large ribosomal subunit protein uL13.